Consider the following 864-residue polypeptide: Leucine--tRNA ligase (864 aa).

The 'HIGH' region motif lies at 40–51; sequence PYPSGAGLHVGH. Positions 636–640 match the 'KMSKS' region motif; the sequence is KMSKS. ATP is bound at residue Lys639.

The protein belongs to the class-I aminoacyl-tRNA synthetase family.

Its subcellular location is the cytoplasm. The enzyme catalyses tRNA(Leu) + L-leucine + ATP = L-leucyl-tRNA(Leu) + AMP + diphosphate. This chain is Leucine--tRNA ligase, found in Leptospira borgpetersenii serovar Hardjo-bovis (strain JB197).